Here is a 99-residue protein sequence, read N- to C-terminus: Small ribosomal subunit protein uS19 (99 aa).

The tract at residues 77–99 is disordered; it reads TRTFHGHSGDKKAKVAKGGPGGR.

Belongs to the universal ribosomal protein uS19 family.

Functionally, protein S19 forms a complex with S13 that binds strongly to the 16S ribosomal RNA. In Sorangium cellulosum (strain So ce56) (Polyangium cellulosum (strain So ce56)), this protein is Small ribosomal subunit protein uS19.